A 194-amino-acid polypeptide reads, in one-letter code: Probable GTP-binding protein EngB (194 aa).

Positions 23 to 194 constitute an EngB-type G domain; that stretch reads DKMEFAFVGR…LNFMEEKLNN (172 aa). GTP contacts are provided by residues 31–38, 58–62, 76–79, 142–145, and 173–175; these read GRSNVGKS, GRTQL, DLPG, TKID, and HSS. Mg(2+) contacts are provided by Ser38 and Thr60.

This sequence belongs to the TRAFAC class TrmE-Era-EngA-EngB-Septin-like GTPase superfamily. EngB GTPase family. Mg(2+) serves as cofactor.

In terms of biological role, necessary for normal cell division and for the maintenance of normal septation. This is Probable GTP-binding protein EngB from Fusobacterium nucleatum subsp. nucleatum (strain ATCC 25586 / DSM 15643 / BCRC 10681 / CIP 101130 / JCM 8532 / KCTC 2640 / LMG 13131 / VPI 4355).